Consider the following 611-residue polypeptide: Rho GTPase-activating protein gacN (611 aa).

Residues 24 to 219 (KTFKKILKPG…VLIEEFHVLY (196 aa)) enclose the Rho-GAP domain. Residues 236 to 499 (IREDKRSTSE…TKLQKSSSSS (264 aa)) are a coiled coil. The segment covering 476–491 (NQLEKEKSKLQDELTK) has biased composition (basic and acidic residues). Residues 476-550 (NQLEKEKSKL…TTPPPPLDED (75 aa)) form a disordered region. Composition is skewed to low complexity over residues 495–509 (SSSSSSSSSSSSSSS) and 527–540 (TTTTTTTTSPAQQP).

The protein resides in the cytoplasm. Rho GTPase-activating protein involved in the signal transduction pathway. The polypeptide is Rho GTPase-activating protein gacN (gacN) (Dictyostelium discoideum (Social amoeba)).